The primary structure comprises 382 residues: E3 ubiquitin-protein ligase RNF133 (382 aa).

Residues 65–167 (SSILKRVAGV…IKGMEILHLI (103 aa)) enclose the PA domain. A helical transmembrane segment spans residues 190-210 (YFVSFMIVTTATLAYFTFYHI). The segment at 256–297 (CVICFEAYKPNEIVRILTCKHFFHKNCIDPWILAHGTCPMCK) adopts an RING-type; atypical zinc-finger fold. The segment at 328–382 (TLSPVEEETNYELPPARTSSKVTHVQEHPTSSANAGSQPPEAEETSHPSHGQQVL) is disordered. Positions 344–364 (RTSSKVTHVQEHPTSSANAGS) are enriched in polar residues.

As to quaternary structure, interacts with E3 ligase UBE2J1. In terms of processing, auto-ubiquitinated. In terms of tissue distribution, expression is testis-specific.

It is found in the endoplasmic reticulum membrane. It catalyses the reaction S-ubiquitinyl-[E2 ubiquitin-conjugating enzyme]-L-cysteine + [acceptor protein]-L-lysine = [E2 ubiquitin-conjugating enzyme]-L-cysteine + N(6)-ubiquitinyl-[acceptor protein]-L-lysine.. Its pathway is protein modification; protein ubiquitination. Its function is as follows. Has E3 ubiquitin-protein ligase activity. Plays a role in male fecundity through the interaction with the E2 ubituitin-protein ligase UBE2J1. The sequence is that of E3 ubiquitin-protein ligase RNF133 (Rnf133) from Mus musculus (Mouse).